Here is a 351-residue protein sequence, read N- to C-terminus: Photosystem II D2 protein (351 aa).

Residues 39–59 (TAYLSIGGWLTGTTFVTSWYT) traverse the membrane as a helical segment. Residue His-116 participates in chlorophyll a binding. Residues 123–139 (GFMLRQFEIARLVGIRP) form a helical membrane-spanning segment. 2 residues coordinate pheophytin a: Gln-128 and Asn-141. Residues 151-164 (VFVSVFLMYPLGQS) traverse the membrane as a helical segment. His-196 provides a ligand contact to chlorophyll a. Residues 206-226 (GALLCAIHGATVENTLFEDGE) form a helical membrane-spanning segment. His-213 and Phe-260 together coordinate a plastoquinone. A Fe cation-binding site is contributed by His-213. His-267 contributes to the Fe cation binding site. Residues 277-293 (GLWTSAIGIIGLALNLR) traverse the membrane as a helical segment.

This sequence belongs to the reaction center PufL/M/PsbA/D family. In terms of assembly, PSII is composed of 1 copy each of membrane proteins PsbA, PsbB, PsbC, PsbD, PsbE, PsbF, PsbH, PsbI, PsbJ, PsbK, PsbL, PsbM, PsbT, PsbX, PsbY, PsbZ, Psb30/Ycf12, peripheral proteins PsbO, CyanoQ (PsbQ), PsbU, PsbV and a large number of cofactors. It forms dimeric complexes. Requires The D1/D2 heterodimer binds P680, chlorophylls that are the primary electron donor of PSII, and subsequent electron acceptors. It shares a non-heme iron and each subunit binds pheophytin, quinone, additional chlorophylls, carotenoids and lipids. There is also a Cl(-1) ion associated with D1 and D2, which is required for oxygen evolution. The PSII complex binds additional chlorophylls, carotenoids and specific lipids. as cofactor.

It is found in the cellular thylakoid membrane. The catalysed reaction is 2 a plastoquinone + 4 hnu + 2 H2O = 2 a plastoquinol + O2. Its function is as follows. Photosystem II (PSII) is a light-driven water:plastoquinone oxidoreductase that uses light energy to abstract electrons from H(2)O, generating O(2) and a proton gradient subsequently used for ATP formation. It consists of a core antenna complex that captures photons, and an electron transfer chain that converts photonic excitation into a charge separation. The D1/D2 (PsbA/PsbD) reaction center heterodimer binds P680, the primary electron donor of PSII as well as several subsequent electron acceptors. D2 is needed for assembly of a stable PSII complex. The sequence is that of Photosystem II D2 protein from Synechococcus sp. (strain CC9311).